Reading from the N-terminus, the 261-residue chain is WW domain-binding protein 2 (261 aa).

The region spanning 1–84 is the GRAM domain; the sequence is MALNKNHSEG…YLMKDCEIKQ (84 aa). Tyr-192 bears the Phosphotyrosine; by YES and SRC mark. The PPxY motif 1 signature appears at 196–200; that stretch reads PPPPY. Positions 196–209 are enriched in pro residues; the sequence is PPPPYPGPMEPPVS. Residues 196–261 form a disordered region; it reads PPPPYPGPME…YYPPEDKKTQ (66 aa). A compositionally biased stretch (low complexity) spans 218 to 230; that stretch reads AAEAKAAEAAASA. At Tyr-231 the chain carries Phosphotyrosine; by YES and SRC. Pro residues predominate over residues 245 to 254; the sequence is SQPPPPPYYP. A PPxY motif 2 motif is present at residues 248 to 252; it reads PPPPY.

As to quaternary structure, binds to the WW domain of YAP1, WWP1 and WWP2. Interacts with NEDD4. Interacts with ESR1 and UBE3A. In terms of processing, phosphorylated in repsonse to EGF as well as estrogen and progesterone hormones. Tyr-192 and Tyr-231 are phosphorylated by YES and SRC inducing nuclear translocation. Ubiquitous.

Its subcellular location is the cytoplasm. It localises to the nucleus. Acts as a transcriptional coactivator of estrogen and progesterone receptors (ESR1 and PGR) upon hormone activation. In presence of estrogen, binds to ESR1-responsive promoters. Synergizes with YAP1 to enhance PGR activity. Modulates expression of post-synaptic scaffolding proteins via regulation of ESR1, ESR2 and PGR. The polypeptide is WW domain-binding protein 2 (Homo sapiens (Human)).